Reading from the N-terminus, the 355-residue chain is MAASHALKPILELLPEELPGEGYRRAQIAHWLYAKGARDFSEMTDLPKALREALAREWRLSEFSLVQAFPSQDGSVKYLFTLLDGKKTEAVYMPYENRKTVCLSTMVGCPAGCTFCATGALGFGRNLTAAEILDQLLTIAYHQGLSPREIRNVVLMGMGEPLLNLRNVLKAVRIMLHKKALALSPRRVTLSTVGIPKGIYRLAEEDLGVRLALSLHAPDDETRRKIIPTAHRYPIAEIMEAVRHYHAKTKRRVTFEYTLLKGVNDHLWQARLLAKLLKGLSAHVNLIPFNPWEGAPVAGTPKAGVLAFAEELKRLGVPTSIRWSRGQDVGAACGQLALKVPRPLTLTPLPEGAGR.

The Proton acceptor role is filled by E89. Residues 95-322 (YENRKTVCLS…KRLGVPTSIR (228 aa)) enclose the Radical SAM core domain. C102 and C333 form a disulfide bridge. 3 residues coordinate [4Fe-4S] cluster: C109, C113, and C116. Residues 159 to 160 (GE), S191, 214 to 216 (SLH), and N290 contribute to the S-adenosyl-L-methionine site. C333 (S-methylcysteine intermediate) is an active-site residue.

The protein belongs to the radical SAM superfamily. RlmN family. [4Fe-4S] cluster is required as a cofactor.

It is found in the cytoplasm. The enzyme catalyses adenosine(2503) in 23S rRNA + 2 reduced [2Fe-2S]-[ferredoxin] + 2 S-adenosyl-L-methionine = 2-methyladenosine(2503) in 23S rRNA + 5'-deoxyadenosine + L-methionine + 2 oxidized [2Fe-2S]-[ferredoxin] + S-adenosyl-L-homocysteine. It catalyses the reaction adenosine(37) in tRNA + 2 reduced [2Fe-2S]-[ferredoxin] + 2 S-adenosyl-L-methionine = 2-methyladenosine(37) in tRNA + 5'-deoxyadenosine + L-methionine + 2 oxidized [2Fe-2S]-[ferredoxin] + S-adenosyl-L-homocysteine. In terms of biological role, specifically methylates position 2 of adenine 2503 in 23S rRNA and position 2 of adenine 37 in tRNAs. The sequence is that of Probable dual-specificity RNA methyltransferase RlmN from Thermus thermophilus (strain ATCC BAA-163 / DSM 7039 / HB27).